Here is a 159-residue protein sequence, read N- to C-terminus: uncharacterized protein (159 aa).

This sequence belongs to the IIV-6 136R family.

This is an uncharacterized protein from Invertebrate iridescent virus 3 (IIV-3).